The sequence spans 572 residues: Dihydroxy-acid dehydratase (572 aa).

Residue Asp-78 participates in Mg(2+) binding. Cys-119 is a binding site for [2Fe-2S] cluster. Mg(2+) is bound by residues Asp-120 and Lys-121. Lys-121 carries the post-translational modification N6-carboxylysine. Position 192 (Cys-192) interacts with [2Fe-2S] cluster. Glu-459 serves as a coordination point for Mg(2+). The active-site Proton acceptor is the Ser-485.

The protein belongs to the IlvD/Edd family. As to quaternary structure, homodimer. [2Fe-2S] cluster is required as a cofactor. Requires Mg(2+) as cofactor.

It carries out the reaction (2R)-2,3-dihydroxy-3-methylbutanoate = 3-methyl-2-oxobutanoate + H2O. It catalyses the reaction (2R,3R)-2,3-dihydroxy-3-methylpentanoate = (S)-3-methyl-2-oxopentanoate + H2O. It functions in the pathway amino-acid biosynthesis; L-isoleucine biosynthesis; L-isoleucine from 2-oxobutanoate: step 3/4. Its pathway is amino-acid biosynthesis; L-valine biosynthesis; L-valine from pyruvate: step 3/4. In terms of biological role, functions in the biosynthesis of branched-chain amino acids. Catalyzes the dehydration of (2R,3R)-2,3-dihydroxy-3-methylpentanoate (2,3-dihydroxy-3-methylvalerate) into 2-oxo-3-methylpentanoate (2-oxo-3-methylvalerate) and of (2R)-2,3-dihydroxy-3-methylbutanoate (2,3-dihydroxyisovalerate) into 2-oxo-3-methylbutanoate (2-oxoisovalerate), the penultimate precursor to L-isoleucine and L-valine, respectively. The sequence is that of Dihydroxy-acid dehydratase from Helicobacter hepaticus (strain ATCC 51449 / 3B1).